The sequence spans 156 residues: Small ribosomal subunit protein uS7 (156 aa).

It belongs to the universal ribosomal protein uS7 family. As to quaternary structure, part of the 30S ribosomal subunit. Contacts proteins S9 and S11.

Functionally, one of the primary rRNA binding proteins, it binds directly to 16S rRNA where it nucleates assembly of the head domain of the 30S subunit. Is located at the subunit interface close to the decoding center, probably blocks exit of the E-site tRNA. The protein is Small ribosomal subunit protein uS7 of Streptococcus sanguinis (strain SK36).